A 483-amino-acid chain; its full sequence is Protein PLASTID TRANSCRIPTIONALLY ACTIVE 14 (483 aa).

The N-terminal 62 residues, 1-62, are a transit peptide targeting the chloroplast; the sequence is MASSVSLQFL…TQPFPLFQSP (62 aa). One can recognise an SET domain in the interval 80–325; that stretch reads YKIGYVRSVR…KGEEMTINYM (246 aa). Position 324 (tyrosine 324) interacts with S-adenosyl-L-methionine.

The protein belongs to the class V-like SAM-binding methyltransferase superfamily. Component of the transcriptionally active chromosome (TAC) complexes. Interacts with PTAC12/HMR/PAP5 and PTAC7. Binds to SL1/MTERF3. Mostly expressed in leaves, flowers and seedlings, and, to a lower extent, in stems and roots.

Its subcellular location is the plastid. It localises to the chloroplast thylakoid. Functionally, essential for chloroplast development, especially for thylakoid formation. Involved in plastid gene expression, probably by maintaining plastid-encoded RNA polymerase (PEP) activity. This Arabidopsis thaliana (Mouse-ear cress) protein is Protein PLASTID TRANSCRIPTIONALLY ACTIVE 14.